We begin with the raw amino-acid sequence, 472 residues long: Carbohydrate sulfotransferase 3 (472 aa).

The Cytoplasmic segment spans residues 1–19; the sequence is MEKGLALPQDFRDLVHSLK. A helical; Signal-anchor for type II membrane protein membrane pass occupies residues 20-38; it reads IRGRYVLFLAFVVIVFIFI. Residues 39–472 lie on the Lumenal side of the membrane; sequence EKENKIISRV…LEERGTFWVT (434 aa). N63, N74, and N96 each carry an N-linked (GlcNAc...) asparagine glycan. 135–141 contacts 3'-phosphoadenylyl sulfate; that stretch reads TRTGSSF. Residue N250 is glycosylated (N-linked (GlcNAc...) asparagine). Residue 295–303 coordinates 3'-phosphoadenylyl sulfate; the sequence is RDPRAVLAS. Residues N413 and N457 are each glycosylated (N-linked (GlcNAc...) asparagine).

It belongs to the sulfotransferase 1 family. Gal/GlcNAc/GalNAc subfamily. N-glycosylated. As to expression, widely expressed. Highly expressed in spleen, lung, eye and stomach. Constitutively expressed at low level during the mid- to late-gestation period. Expressed in the brain in a temporally controlled manner: peaks at 2 weeks after birth in the cerebellum, but at 3 weeks in the cerebrum. Localizes to stromal cells in the bone marrow, and stromal cells in the marginal zone and red pulp of the spleen, but the sense probe did not.

The protein localises to the golgi apparatus membrane. It carries out the reaction chondroitin beta-D-glucuronate + n 3'-phosphoadenylyl sulfate = chondroitin 6'-sulfate + n adenosine 3',5'-bisphosphate + n H(+). It catalyses the reaction 3'-phosphoadenylyl sulfate + keratan = adenosine 3',5'-bisphosphate + keratan 6'-sulfate.. Sulfotransferase that utilizes 3'-phospho-5'-adenylyl sulfate (PAPS) as sulfonate donor to catalyze the transfer of sulfate to position 6 of the N-acetylgalactosamine (GalNAc) residue of chondroitin. Chondroitin sulfate constitutes the predominant proteoglycan present in cartilage and is distributed on the surfaces of many cells and extracellular matrices. Catalyzes with a lower efficiency the sulfation of Gal residues of keratan sulfate, another glycosaminoglycan. Can also catalyze the sulfation of the Gal residues in sialyl N-acetyllactosamine (sialyl LacNAc) oligosaccharides. May play a role in the maintenance of naive T-lymphocytes in the spleen. The polypeptide is Carbohydrate sulfotransferase 3 (Chst3) (Mus musculus (Mouse)).